The sequence spans 298 residues: Acetyl-coenzyme A carboxylase carboxyl transferase subunit beta (298 aa).

In terms of domain architecture, CoA carboxyltransferase N-terminal spans 26–295; sequence LWIKCPETGE…DNANAVVPLA (270 aa).

It belongs to the AccD/PCCB family. In terms of assembly, acetyl-CoA carboxylase is a heterohexamer composed of biotin carboxyl carrier protein (AccB), biotin carboxylase (AccC) and two subunits each of ACCase subunit alpha (AccA) and ACCase subunit beta (AccD).

The protein localises to the cytoplasm. It carries out the reaction N(6)-carboxybiotinyl-L-lysyl-[protein] + acetyl-CoA = N(6)-biotinyl-L-lysyl-[protein] + malonyl-CoA. It participates in lipid metabolism; malonyl-CoA biosynthesis; malonyl-CoA from acetyl-CoA: step 1/1. In terms of biological role, component of the acetyl coenzyme A carboxylase (ACC) complex. Biotin carboxylase (BC) catalyzes the carboxylation of biotin on its carrier protein (BCCP) and then the CO(2) group is transferred by the transcarboxylase to acetyl-CoA to form malonyl-CoA. The protein is Acetyl-coenzyme A carboxylase carboxyl transferase subunit beta of Agrobacterium fabrum (strain C58 / ATCC 33970) (Agrobacterium tumefaciens (strain C58)).